A 534-amino-acid chain; its full sequence is Chaperonin GroEL (534 aa).

Residues 29–32, 86–90, Gly-413, and Asp-494 contribute to the ATP site; these read TAGP and DGTTT.

It belongs to the chaperonin (HSP60) family. In terms of assembly, forms a cylinder of 14 subunits composed of two heptameric rings stacked back-to-back. Interacts with the co-chaperonin GroES.

It localises to the cytoplasm. It carries out the reaction ATP + H2O + a folded polypeptide = ADP + phosphate + an unfolded polypeptide.. In terms of biological role, together with its co-chaperonin GroES, plays an essential role in assisting protein folding. The GroEL-GroES system forms a nano-cage that allows encapsulation of the non-native substrate proteins and provides a physical environment optimized to promote and accelerate protein folding. The polypeptide is Chaperonin GroEL (Mycoplasmoides gallisepticum (strain R(low / passage 15 / clone 2)) (Mycoplasma gallisepticum)).